The chain runs to 369 residues: Phosphoribosyl pyrophosphate synthase-associated protein 2 (369 aa).

At M1 the chain carries N-acetylmethionine. Phosphoserine occurs at positions 219, 227, and 233.

This sequence belongs to the ribose-phosphate pyrophosphokinase family. Binds to PRPS1 and PRPS2.

Seems to play a negative regulatory role in 5-phosphoribose 1-diphosphate synthesis. This chain is Phosphoribosyl pyrophosphate synthase-associated protein 2 (Prpsap2), found in Mus musculus (Mouse).